The following is a 144-amino-acid chain: Large ribosomal subunit protein uL13 (144 aa).

This sequence belongs to the universal ribosomal protein uL13 family. Part of the 50S ribosomal subunit.

Functionally, this protein is one of the early assembly proteins of the 50S ribosomal subunit, although it is not seen to bind rRNA by itself. It is important during the early stages of 50S assembly. This Syntrophomonas wolfei subsp. wolfei (strain DSM 2245B / Goettingen) protein is Large ribosomal subunit protein uL13.